An 880-amino-acid chain; its full sequence is Probable receptor-like protein kinase At5g38990 (880 aa).

An N-terminal signal peptide occupies residues 1–21 (MICHVLVIFTILVSAVVDATA). Residues 22–440 (SYEPTDVFLI…GKGKSSHVLP (419 aa)) lie on the Extracellular side of the membrane. N-linked (GlcNAc...) asparagine glycosylation is found at N46, N136, N158, N210, N256, N263, N297, and N324. A helical transmembrane segment spans residues 441-461 (IIIAVVGSAVALAFFVLVVVL). Topologically, residues 462–880 (VVMKRKKKSN…FSEINEPKAR (419 aa)) are cytoplasmic. The segment at 471–505 (NESSVDTTNKPSTNSSWGPLLHGTGSTNTKSASSL) is disordered. Polar residues-rich tracts occupy residues 472 to 487 (ESSVDTTNKPSTNSSW) and 494 to 505 (TGSTNTKSASSL). Positions 525–810 (FEEKLIIGVG…EFALQLHETA (286 aa)) constitute a Protein kinase domain. ATP contacts are provided by residues 531 to 539 (IGVGGFGSV) and K554. The active-site Proton acceptor is the D653. The interval 820 to 846 (LDLMPSGEVGTTTDGEDDLFSRTTGHV) is disordered.

This sequence belongs to the protein kinase superfamily. Ser/Thr protein kinase family.

Its subcellular location is the membrane. The polypeptide is Probable receptor-like protein kinase At5g38990 (Arabidopsis thaliana (Mouse-ear cress)).